Reading from the N-terminus, the 276-residue chain is Large ribosomal subunit protein uL2 (276 aa).

Disordered stretches follow at residues 1-60 (MSIK…RHKR) and 226-276 (NAVD…KRNQ). The span at 20 to 31 (SKEEITREEPEK) shows a compositional bias: basic and acidic residues. 2 stretches are compositionally biased toward basic residues: residues 50 to 60 (STRRQGGRHKR) and 258 to 276 (KTRRKAKKSDKYIVKKRNQ).

The protein belongs to the universal ribosomal protein uL2 family. In terms of assembly, part of the 50S ribosomal subunit. Forms a bridge to the 30S subunit in the 70S ribosome.

Functionally, one of the primary rRNA binding proteins. Required for association of the 30S and 50S subunits to form the 70S ribosome, for tRNA binding and peptide bond formation. It has been suggested to have peptidyltransferase activity; this is somewhat controversial. Makes several contacts with the 16S rRNA in the 70S ribosome. In Natranaerobius thermophilus (strain ATCC BAA-1301 / DSM 18059 / JW/NM-WN-LF), this protein is Large ribosomal subunit protein uL2.